We begin with the raw amino-acid sequence, 392 residues long: Methylthioribose-1-phosphate isomerase (392 aa).

Asp267 acts as the Proton donor in catalysis.

It belongs to the eIF-2B alpha/beta/delta subunits family. MtnA subfamily.

It is found in the cytoplasm. Its subcellular location is the nucleus. It carries out the reaction 5-(methylsulfanyl)-alpha-D-ribose 1-phosphate = 5-(methylsulfanyl)-D-ribulose 1-phosphate. It participates in amino-acid biosynthesis; L-methionine biosynthesis via salvage pathway; L-methionine from S-methyl-5-thio-alpha-D-ribose 1-phosphate: step 1/6. In terms of biological role, catalyzes the interconversion of methylthioribose-1-phosphate (MTR-1-P) into methylthioribulose-1-phosphate (MTRu-1-P). This is Methylthioribose-1-phosphate isomerase from Ajellomyces dermatitidis (strain ER-3 / ATCC MYA-2586) (Blastomyces dermatitidis).